Here is a 157-residue protein sequence, read N- to C-terminus: Phosphopantetheine adenylyltransferase (157 aa).

S9 lines the substrate pocket. ATP contacts are provided by residues 9–10 (SF) and H17. Substrate contacts are provided by K41, V73, and K87. Residues 88 to 90 (GLR), E98, and 122 to 128 (YSFVSSS) each bind ATP.

This sequence belongs to the bacterial CoaD family. Homohexamer. The cofactor is Mg(2+).

The protein resides in the cytoplasm. It carries out the reaction (R)-4'-phosphopantetheine + ATP + H(+) = 3'-dephospho-CoA + diphosphate. The protein operates within cofactor biosynthesis; coenzyme A biosynthesis; CoA from (R)-pantothenate: step 4/5. Its function is as follows. Reversibly transfers an adenylyl group from ATP to 4'-phosphopantetheine, yielding dephospho-CoA (dPCoA) and pyrophosphate. This chain is Phosphopantetheine adenylyltransferase, found in Mycobacterium marinum (strain ATCC BAA-535 / M).